Reading from the N-terminus, the 313-residue chain is Beta-ketoacyl-[acyl-carrier-protein] synthase III (313 aa).

Active-site residues include Cys112 and His238. Residues 239–243 (QANIR) are ACP-binding. Asn268 is a catalytic residue.

Belongs to the thiolase-like superfamily. FabH family. In terms of assembly, homodimer.

It is found in the cytoplasm. It carries out the reaction malonyl-[ACP] + acetyl-CoA + H(+) = 3-oxobutanoyl-[ACP] + CO2 + CoA. It functions in the pathway lipid metabolism; fatty acid biosynthesis. Catalyzes the condensation reaction of fatty acid synthesis by the addition to an acyl acceptor of two carbons from malonyl-ACP. Catalyzes the first condensation reaction which initiates fatty acid synthesis and may therefore play a role in governing the total rate of fatty acid production. Possesses both acetoacetyl-ACP synthase and acetyl transacylase activities. Its substrate specificity determines the biosynthesis of branched-chain and/or straight-chain of fatty acids. The chain is Beta-ketoacyl-[acyl-carrier-protein] synthase III from Staphylococcus haemolyticus (strain JCSC1435).